A 166-amino-acid polypeptide reads, in one-letter code: 3-isopropylmalate dehydratase small subunit (166 aa).

This sequence belongs to the LeuD family. LeuD type 2 subfamily. As to quaternary structure, heterodimer of LeuC and LeuD.

The enzyme catalyses (2R,3S)-3-isopropylmalate = (2S)-2-isopropylmalate. Its pathway is amino-acid biosynthesis; L-leucine biosynthesis; L-leucine from 3-methyl-2-oxobutanoate: step 2/4. In terms of biological role, catalyzes the isomerization between 2-isopropylmalate and 3-isopropylmalate, via the formation of 2-isopropylmaleate. The chain is 3-isopropylmalate dehydratase small subunit from Caldicellulosiruptor bescii (strain ATCC BAA-1888 / DSM 6725 / KCTC 15123 / Z-1320) (Anaerocellum thermophilum).